The following is a 772-amino-acid chain: Larval serum protein 1 gamma chain (772 aa).

Residues 1–16 (MKLTLVILALVACVTA) form the signal peptide. N-linked (GlcNAc...) asparagine glycosylation is present at Asn-242.

This sequence belongs to the hemocyanin family. In terms of assembly, heterohexamer, composed of three subunits, alpha, beta and gamma. Larval hemolymph.

It is found in the secreted. Its subcellular location is the extracellular space. Larval storage protein (LSP) which may serve as a store of amino acids for synthesis of adult proteins. This is Larval serum protein 1 gamma chain (Lsp1gamma) from Drosophila melanogaster (Fruit fly).